The sequence spans 142 residues: ATP synthase epsilon chain (142 aa).

The protein belongs to the ATPase epsilon chain family. As to quaternary structure, F-type ATPases have 2 components, CF(1) - the catalytic core - and CF(0) - the membrane proton channel. CF(1) has five subunits: alpha(3), beta(3), gamma(1), delta(1), epsilon(1). CF(0) has three main subunits: a, b and c.

Its subcellular location is the cell inner membrane. Its function is as follows. Produces ATP from ADP in the presence of a proton gradient across the membrane. In Actinobacillus succinogenes (strain ATCC 55618 / DSM 22257 / CCUG 43843 / 130Z), this protein is ATP synthase epsilon chain.